The sequence spans 280 residues: Orotidine 5'-phosphate decarboxylase (280 aa).

Substrate is bound by residues D40, 62–64 (KTH), 93–102 (DRKFVDIGNT), Y228, and R246. Catalysis depends on K95, which acts as the Proton donor.

It belongs to the OMP decarboxylase family.

The enzyme catalyses orotidine 5'-phosphate + H(+) = UMP + CO2. It functions in the pathway pyrimidine metabolism; UMP biosynthesis via de novo pathway; UMP from orotate: step 2/2. This is Orotidine 5'-phosphate decarboxylase (PYRG) from Solorina crocea.